Consider the following 160-residue polypeptide: Large ribosomal subunit protein uL22c (160 aa).

This sequence belongs to the universal ribosomal protein uL22 family. As to quaternary structure, part of the 50S ribosomal subunit.

Its subcellular location is the plastid. It localises to the chloroplast. This protein binds specifically to 23S rRNA. Its function is as follows. The globular domain of the protein is located near the polypeptide exit tunnel on the outside of the subunit, while an extended beta-hairpin is found that lines the wall of the exit tunnel in the center of the 70S ribosome. This Olimarabidopsis pumila (Dwarf rocket) protein is Large ribosomal subunit protein uL22c (rpl22).